We begin with the raw amino-acid sequence, 92 residues long: MARSIWKGPFVDGYLIKKVQKLMKSGKSEMIKTWSRRSTILPLFVGFTFSVHNGNKFIPVYINEEMVGRKLGEFAPTRTFHGHGADKKVKRK.

It belongs to the universal ribosomal protein uS19 family.

Protein S19 forms a complex with S13 that binds strongly to the 16S ribosomal RNA. This chain is Small ribosomal subunit protein uS19, found in Rickettsia typhi (strain ATCC VR-144 / Wilmington).